The following is a 454-amino-acid chain: Protein disulfide-isomerase TMX3 (454 aa).

The signal sequence occupies residues 1 to 24; the sequence is MAAWKSWAALRLCATVVLLDMVVC. The Thioredoxin domain occupies 25–128; sequence KGFVEDLDES…KDDIIEFAHR (104 aa). Topologically, residues 25-375 are lumenal; it reads KGFVEDLDES…TIVSIFKSSP (351 aa). Residues C53 and C56 each act as nucleophile in the active site. A disulfide bridge links C53 with C56. 2 N-linked (GlcNAc...) asparagine glycosylation sites follow: N258 and N313. The chain crosses the membrane as a helical span at residues 376 to 396; sequence LMGCFLFGLPLGVISIMCYGI. Residues 397–454 lie on the Cytoplasmic side of the membrane; it reads YTADTDGGYIEERYEVSKSENENQEQIEESKEQQEPSSGGSVVPTVQEPKDVLEKKKD. The interval 412–454 is disordered; sequence VSKSENENQEQIEESKEQQEPSSGGSVVPTVQEPKDVLEKKKD. The span at 444–454 shows a compositional bias: basic and acidic residues; sequence EPKDVLEKKKD. The Di-lysine motif motif lies at 451–454; sequence KKKD.

The protein belongs to the protein disulfide isomerase family.

The protein resides in the endoplasmic reticulum membrane. The catalysed reaction is Catalyzes the rearrangement of -S-S- bonds in proteins.. Its function is as follows. Probable disulfide isomerase, which participates in the folding of proteins containing disulfide bonds. May act as a dithiol oxidase. Acts as a regulator of endoplasmic reticulum-mitochondria contact sites via its ability to regulate redox signals. The polypeptide is Protein disulfide-isomerase TMX3 (TMX3) (Pongo abelii (Sumatran orangutan)).